The sequence spans 141 residues: Hemoglobin subunit alpha-D (141 aa).

Residues Val-1–Arg-141 enclose the Globin domain. The heme b site is built by His-58 and His-87.

This sequence belongs to the globin family. As to quaternary structure, heterotetramer of two alpha-D chains and two beta chains. In terms of tissue distribution, red blood cells.

Involved in oxygen transport from the lung to the various peripheral tissues. This chain is Hemoglobin subunit alpha-D (HBAD), found in Turdus merula (Common blackbird).